We begin with the raw amino-acid sequence, 793 residues long: DNA mismatch repair protein MutS (793 aa).

An ATP-binding site is contributed by 589 to 596 (GPNMSGKS).

The protein belongs to the DNA mismatch repair MutS family.

In terms of biological role, this protein is involved in the repair of mismatches in DNA. It is possible that it carries out the mismatch recognition step. This protein has a weak ATPase activity. The polypeptide is DNA mismatch repair protein MutS (Thermotoga petrophila (strain ATCC BAA-488 / DSM 13995 / JCM 10881 / RKU-1)).